Consider the following 458-residue polypeptide: Retinoic acid receptor gamma (458 aa).

Positions 1–89 (MATNKERLFA…PPPPPRVYKP (89 aa)) are modulating. Arg34 is subject to Omega-N-methylarginine. The segment at 58–83 (MASLSVETQSTSSEEMVPSSPSPPPP) is disordered. Positions 62-71 (SVETQSTSSE) are enriched in polar residues. NR C4-type zinc fingers lie at residues 90 to 110 (CFVC…CEGC) and 126 to 150 (CHRD…LQKC). The nuclear receptor DNA-binding region spans 90–155 (CFVCNDKSSG…RLQKCFEVGM (66 aa)). Positions 156-184 (SKEAVRNDRNKKKKEVKEEGSPDSYELSP) are hinge. The segment at 161-180 (RNDRNKKKKEVKEEGSPDSY) is disordered. Glycyl lysine isopeptide (Lys-Gly) (interchain with G-Cter in SUMO2) cross-links involve residues Lys172 and Lys401. One can recognise an NR LBD domain in the interval 185–419 (QLEELITKVS…PLIREMLENP (235 aa)). Residues 409–458 (PPLIREMLENPEMFEDDSSKPGPHPKASSEDEAPGGQGKRGQSPQPDQGP) form a disordered region. Positions 448–458 (RGQSPQPDQGP) are enriched in polar residues.

The protein belongs to the nuclear hormone receptor family. NR1 subfamily. As to quaternary structure, homodimer. Heterodimer with a RXR molecule. Binds DNA preferentially as a RAR/RXR heterodimer. Forms a complex with PUS1 and the SRA1 RNA in the nucleus.

It localises to the nucleus. The protein resides in the cytoplasm. Receptor for retinoic acid. Retinoic acid receptors bind as heterodimers to their target response elements in response to their ligands, all-trans or 9-cis retinoic acid, and regulate gene expression in various biological processes. The RAR/RXR heterodimers bind to the retinoic acid response elements (RARE) composed of tandem 5'-AGGTCA-3' sites known as DR1-DR5. In the absence of ligand, acts mainly as an activator of gene expression due to weak binding to corepressors. Required for limb bud development. In concert with RARA or RARB, required for skeletal growth, matrix homeostasis and growth plate function. The sequence is that of Retinoic acid receptor gamma (Rarg) from Mus musculus (Mouse).